The sequence spans 72 residues: UPF0270 protein Ent638_3781 (72 aa).

The protein belongs to the UPF0270 family.

This is UPF0270 protein Ent638_3781 from Enterobacter sp. (strain 638).